A 262-amino-acid chain; its full sequence is 5'-nucleotidase SurE (262 aa).

Residues D8, D9, S40, and N92 each contribute to the a divalent metal cation site.

The protein belongs to the SurE nucleotidase family. Requires a divalent metal cation as cofactor.

The protein resides in the cytoplasm. It catalyses the reaction a ribonucleoside 5'-phosphate + H2O = a ribonucleoside + phosphate. Nucleotidase that shows phosphatase activity on nucleoside 5'-monophosphates. This Xylella fastidiosa (strain M23) protein is 5'-nucleotidase SurE.